Here is a 288-residue protein sequence, read N- to C-terminus: Acidic endochitinase SP2 (288 aa).

An N-terminal signal peptide occupies residues M1–A27. A Pyrrolidone carboxylic acid modification is found at Q28. Positions Q28–G63 constitute a Chitin-binding type-1 domain. Disulfide bonds link C30–C38, C32–C44, C37–C51, and C56–C61. A compositionally biased stretch (low complexity) spans G64–P78. Residues G64–G84 are disordered. A hinge region (Gly/Pro/Thr-rich) region spans residues G64–S85. 4-hydroxyproline is present on residues P66, P69, P72, and P75. Tandem repeats lie at residues T67–P69, T70–P72, T73–P75, and T76–P78. A 4 X 3 AA tandem repeats of T-T-P region spans residues T67–P78. A catalytic region spans residues S86–C288. 3 disulfides stabilise this stretch: C107-C154, C168-C178, and C256-C288. The Proton donor role is filled by E149.

Belongs to the glycosyl hydrolase 19 family. Chitinase class I subfamily. In terms of processing, O-glycosylated on hydroxyprolines; contains xylose. As to expression, localized to infected area.

It is found in the secreted. The protein localises to the extracellular space. It catalyses the reaction Random endo-hydrolysis of N-acetyl-beta-D-glucosaminide (1-&gt;4)-beta-linkages in chitin and chitodextrins.. Its function is as follows. Defense against chitin-containing fungal pathogens. The chain is Acidic endochitinase SP2 (SP2) from Beta vulgaris (Sugar beet).